Here is a 130-residue protein sequence, read N- to C-terminus: Glycine cleavage system H protein (130 aa).

A Lipoyl-binding domain is found at 22–103 (KAYIGISDCA…PYGSWIAAIE (82 aa)). At K63 the chain carries N6-lipoyllysine.

This sequence belongs to the GcvH family. As to quaternary structure, the glycine cleavage system is composed of four proteins: P, T, L and H. The cofactor is (R)-lipoate.

In terms of biological role, the glycine cleavage system catalyzes the degradation of glycine. The H protein shuttles the methylamine group of glycine from the P protein to the T protein. The polypeptide is Glycine cleavage system H protein (Clostridium botulinum (strain Okra / Type B1)).